Reading from the N-terminus, the 608-residue chain is UvrABC system protein C (608 aa).

Residues H15–V93 enclose the GIY-YIG domain. In terms of domain architecture, UVR spans R203 to V238.

The protein belongs to the UvrC family. As to quaternary structure, interacts with UvrB in an incision complex.

The protein localises to the cytoplasm. Functionally, the UvrABC repair system catalyzes the recognition and processing of DNA lesions. UvrC both incises the 5' and 3' sides of the lesion. The N-terminal half is responsible for the 3' incision and the C-terminal half is responsible for the 5' incision. This chain is UvrABC system protein C, found in Aliivibrio salmonicida (strain LFI1238) (Vibrio salmonicida (strain LFI1238)).